The sequence spans 362 residues: NAD(P)H-quinone oxidoreductase subunit 1, chloroplastic (362 aa).

8 helical membrane passes run 27 to 47, 103 to 123, 128 to 148, 164 to 184, 202 to 222, 247 to 267, 303 to 323, and 342 to 362; these read IWIL…LVIV, IAVI…HFVL, IGVF…LMAG, AAQS…ISLL, FFGW…ISSL, YSGI…LVSS, VIGI…SITI, and FLLP…LVSL.

It belongs to the complex I subunit 1 family. NDH is composed of at least 16 different subunits, 5 of which are encoded in the nucleus.

The protein resides in the plastid. The protein localises to the chloroplast thylakoid membrane. The enzyme catalyses a plastoquinone + NADH + (n+1) H(+)(in) = a plastoquinol + NAD(+) + n H(+)(out). It carries out the reaction a plastoquinone + NADPH + (n+1) H(+)(in) = a plastoquinol + NADP(+) + n H(+)(out). NDH shuttles electrons from NAD(P)H:plastoquinone, via FMN and iron-sulfur (Fe-S) centers, to quinones in the photosynthetic chain and possibly in a chloroplast respiratory chain. The immediate electron acceptor for the enzyme in this species is believed to be plastoquinone. Couples the redox reaction to proton translocation, and thus conserves the redox energy in a proton gradient. The polypeptide is NAD(P)H-quinone oxidoreductase subunit 1, chloroplastic (Saccharum hybrid (Sugarcane)).